Consider the following 345-residue polypeptide: S-adenosylmethionine:tRNA ribosyltransferase-isomerase (345 aa).

Belongs to the QueA family. As to quaternary structure, monomer.

It is found in the cytoplasm. It carries out the reaction 7-aminomethyl-7-carbaguanosine(34) in tRNA + S-adenosyl-L-methionine = epoxyqueuosine(34) in tRNA + adenine + L-methionine + 2 H(+). It participates in tRNA modification; tRNA-queuosine biosynthesis. In terms of biological role, transfers and isomerizes the ribose moiety from AdoMet to the 7-aminomethyl group of 7-deazaguanine (preQ1-tRNA) to give epoxyqueuosine (oQ-tRNA). The sequence is that of S-adenosylmethionine:tRNA ribosyltransferase-isomerase from Thermodesulfovibrio yellowstonii (strain ATCC 51303 / DSM 11347 / YP87).